We begin with the raw amino-acid sequence, 834 residues long: Phenylalanine--tRNA ligase beta subunit (834 aa).

The tRNA-binding domain occupies 48 to 159 (GDIERPLVVG…GTAEPGTDAN (112 aa)). The B5 domain maps to 411 to 492 (PAPEPIRMDI…RLEGLEQIPS (82 aa)). Mg(2+)-binding residues include Asp-470, Asp-476, Glu-479, and Glu-480. The FDX-ACB domain occupies 740–833 (SPFPAVLQDV…AADAVGAVLR (94 aa)).

It belongs to the phenylalanyl-tRNA synthetase beta subunit family. Type 1 subfamily. Tetramer of two alpha and two beta subunits. Mg(2+) serves as cofactor.

The protein localises to the cytoplasm. It carries out the reaction tRNA(Phe) + L-phenylalanine + ATP = L-phenylalanyl-tRNA(Phe) + AMP + diphosphate + H(+). The sequence is that of Phenylalanine--tRNA ligase beta subunit from Nocardia farcinica (strain IFM 10152).